We begin with the raw amino-acid sequence, 145 residues long: LIM domain only protein 3 (145 aa).

LIM zinc-binding domains follow at residues 11–73 (KGCA…LFGV) and 75–137 (GNCA…GLMK).

The sequence is that of LIM domain only protein 3 (LMO3) from Bos taurus (Bovine).